Consider the following 84-residue polypeptide: Small ribosomal subunit protein uS17 (84 aa).

It belongs to the universal ribosomal protein uS17 family. Part of the 30S ribosomal subunit.

Its function is as follows. One of the primary rRNA binding proteins, it binds specifically to the 5'-end of 16S ribosomal RNA. This is Small ribosomal subunit protein uS17 from Thermoanaerobacter pseudethanolicus (strain ATCC 33223 / 39E) (Clostridium thermohydrosulfuricum).